Here is a 234-residue protein sequence, read N- to C-terminus: Sugar fermentation stimulation protein A (234 aa).

The segment at residues 201 to 220 (LLSEAQQRGVEILAYKAEIS) is a DNA-binding region (H-T-H motif).

The protein belongs to the SfsA family.

In terms of biological role, binds to DNA non-specifically. Could be a regulatory factor involved in maltose metabolism. This is Sugar fermentation stimulation protein A from Shigella dysenteriae serotype 1 (strain Sd197).